A 136-amino-acid chain; its full sequence is Ubiquinol-cytochrome c reductase complex assembly factor 2 (136 aa).

The transit peptide at 1–13 directs the protein to the mitochondrion; that stretch reads MAASRYRRFLKLC. Positions 114–136 are disordered; sequence KFAPGSPEGKHTAWARALPRPRT.

In terms of assembly, interacts with UQCC1. Forms a complex, named COMB/coordinator of mitochondrial CYTB biogenesis, composed of UQCC1, UQCC2, UQCC4, UQCC5 and UQCC6; stabilizes nascent cytochrome b/MT-CYB and promotes its membrane insertion. Forms a complex, named COMB/coordinator of mitochondrial CYTB biogenesis, composed of UQCC1, UQCC2, UQCC4, UQCC5 and UQCC6; stabilizes nascent cytochrome b/MT-CYB and promotes its membrane insertion. Forms a complex, named COMA, composed of UQCC1, UQCC2 and UQCC4; activates MT-CYB translation. Forms a complex, named COMC, composed of UQCC1, UQCC2; UQCC3 and UQCC4; mediates MT-CYB hemylation and association with the first nuclear-encoded CIII subunit UQCRQ.

It localises to the mitochondrion matrix. Its subcellular location is the mitochondrion nucleoid. It is found in the mitochondrion. The protein localises to the mitochondrion intermembrane space. The protein resides in the mitochondrion inner membrane. In terms of biological role, required for the assembly of the ubiquinol-cytochrome c reductase complex (mitochondrial respiratory chain complex III or cytochrome b-c1 complex). Plays a role in the modulation of respiratory chain activities such as oxygen consumption and ATP production and via its modulation of the respiratory chain activity can regulate skeletal muscle differentiation and insulin secretion by pancreatic beta-cells. Involved in cytochrome b translation and/or stability. In Bos taurus (Bovine), this protein is Ubiquinol-cytochrome c reductase complex assembly factor 2 (UQCC2).